A 593-amino-acid polypeptide reads, in one-letter code: Aspartate--tRNA(Asp/Asn) ligase (593 aa).

Glu182 lines the L-aspartate pocket. Positions 206–209 (QLFK) are aspartate. Residue Arg228 participates in L-aspartate binding. Residues 228-230 (RDE) and Gln237 each bind ATP. His455 contributes to the L-aspartate binding site. Glu489 is a binding site for ATP. Arg496 is a binding site for L-aspartate. Residue 541–544 (GLDR) coordinates ATP.

This sequence belongs to the class-II aminoacyl-tRNA synthetase family. Type 1 subfamily. As to quaternary structure, homodimer.

It is found in the cytoplasm. The enzyme catalyses tRNA(Asx) + L-aspartate + ATP = L-aspartyl-tRNA(Asx) + AMP + diphosphate. Aspartyl-tRNA synthetase with relaxed tRNA specificity since it is able to aspartylate not only its cognate tRNA(Asp) but also tRNA(Asn). Reaction proceeds in two steps: L-aspartate is first activated by ATP to form Asp-AMP and then transferred to the acceptor end of tRNA(Asp/Asn). The polypeptide is Aspartate--tRNA(Asp/Asn) ligase (Geotalea uraniireducens (strain Rf4) (Geobacter uraniireducens)).